A 91-amino-acid polypeptide reads, in one-letter code: Small ribosomal subunit protein bS6 (91 aa).

The protein belongs to the bacterial ribosomal protein bS6 family.

In terms of biological role, binds together with bS18 to 16S ribosomal RNA. The sequence is that of Small ribosomal subunit protein bS6 from Leptospira borgpetersenii serovar Hardjo-bovis (strain JB197).